A 218-amino-acid polypeptide reads, in one-letter code: MARKKVRPRLIAELARRVRALREQRNQPRDSQLYALDYETLTRPHSGRRLPVRAWADVRRESRLLQLLARLPLFGLGRLVTRKSWLWQHDEPCYWRLTRVRPDYTAQNLDHGRAWGILTFKGKSEDTAREIEQVMYHDWRLVPKHEEEAFTAFTAKPEDRLNSVPYPPLLRAMILAERQKNGDTSVQEPLLNLERTRMRPWDYPAKQETKGRAKGTPV.

Belongs to the mitochondrion-specific ribosomal protein mS34 family. Component of the mitochondrial ribosome small subunit (28S) which comprises a 12S rRNA and about 30 distinct proteins. Widely expressed (at protein liver).

It is found in the mitochondrion. Functionally, required for mitochondrial translation, plays a role in maintaining the stability of the small ribosomal subunit and the 12S rRNA that are required for mitoribosome formation. The sequence is that of Small ribosomal subunit protein mS34 (Mrps34) from Mus musculus (Mouse).